Reading from the N-terminus, the 539-residue chain is Glycerol kinase (539 aa).

Position 49 (threonine 49) interacts with ADP. 3 residues coordinate ATP: threonine 49, threonine 50, and serine 51. Threonine 49 lines the sn-glycerol 3-phosphate pocket. Arginine 53 contacts ADP. Arginine 119, glutamate 120, tyrosine 171, and aspartate 280 together coordinate sn-glycerol 3-phosphate. Glycerol is bound by residues arginine 119, glutamate 120, tyrosine 171, aspartate 280, and glutamine 281. ADP is bound by residues threonine 302 and glycine 345. Positions 302, 345, 349, and 446 each coordinate ATP. ADP contacts are provided by glycine 446 and asparagine 450.

This sequence belongs to the FGGY kinase family.

It catalyses the reaction glycerol + ATP = sn-glycerol 3-phosphate + ADP + H(+). Its pathway is polyol metabolism; glycerol degradation via glycerol kinase pathway; sn-glycerol 3-phosphate from glycerol: step 1/1. Inhibited by fructose 1,6-bisphosphate (FBP). In terms of biological role, key enzyme in the regulation of glycerol uptake and metabolism. Catalyzes the phosphorylation of glycerol to yield sn-glycerol 3-phosphate. The polypeptide is Glycerol kinase (Rhodopirellula baltica (strain DSM 10527 / NCIMB 13988 / SH1)).